The following is a 628-amino-acid chain: Phosphomethylpyrimidine synthase (628 aa).

Substrate contacts are provided by residues Asn228, Met257, Tyr286, His322, Ser342 to Gly344, Asp383 to Arg386, and Glu422. Residue His426 participates in Zn(2+) binding. Residue Tyr449 coordinates substrate. His490 is a Zn(2+) binding site. Positions 570, 573, and 578 each coordinate [4Fe-4S] cluster.

This sequence belongs to the ThiC family. In terms of assembly, homodimer. The cofactor is [4Fe-4S] cluster.

It catalyses the reaction 5-amino-1-(5-phospho-beta-D-ribosyl)imidazole + S-adenosyl-L-methionine = 4-amino-2-methyl-5-(phosphooxymethyl)pyrimidine + CO + 5'-deoxyadenosine + formate + L-methionine + 3 H(+). Its pathway is cofactor biosynthesis; thiamine diphosphate biosynthesis. In terms of biological role, catalyzes the synthesis of the hydroxymethylpyrimidine phosphate (HMP-P) moiety of thiamine from aminoimidazole ribotide (AIR) in a radical S-adenosyl-L-methionine (SAM)-dependent reaction. The sequence is that of Phosphomethylpyrimidine synthase from Methylibium petroleiphilum (strain ATCC BAA-1232 / LMG 22953 / PM1).